Reading from the N-terminus, the 272-residue chain is Phosphoglycolate phosphatase (272 aa).

Residue aspartate 19 is the Nucleophile of the active site. Aspartate 19, aspartate 21, and aspartate 182 together coordinate Mg(2+).

This sequence belongs to the HAD-like hydrolase superfamily. CbbY/CbbZ/Gph/YieH family. Requires Mg(2+) as cofactor.

The enzyme catalyses 2-phosphoglycolate + H2O = glycolate + phosphate. Its pathway is organic acid metabolism; glycolate biosynthesis; glycolate from 2-phosphoglycolate: step 1/1. Its function is as follows. Specifically catalyzes the dephosphorylation of 2-phosphoglycolate. Is involved in the dissimilation of the intracellular 2-phosphoglycolate formed during the DNA repair of 3'-phosphoglycolate ends, a major class of DNA lesions induced by oxidative stress. The protein is Phosphoglycolate phosphatase of Pseudomonas syringae pv. syringae (strain B728a).